The chain runs to 745 residues: Bacteriophage N4 adsorption protein B (745 aa).

3 consecutive transmembrane segments (helical) span residues 8-28, 362-382, and 393-413; these read FATW…IMFI, ISNF…LLLA, and FLSI…NFGL.

It is found in the cell inner membrane. In terms of biological role, required for bacteriophage N4 adsorption. May be a component of the phage receptor. This chain is Bacteriophage N4 adsorption protein B (nfrB), found in Escherichia coli O157:H7.